The following is a 749-amino-acid chain: Homeobox-leucine zipper protein ROC7 (749 aa).

The interval 26–98 (LDQHQQHQHQ…KKRYHRHTQH (73 aa)) is disordered. A compositionally biased stretch (basic and acidic residues) spans 46–57 (SDGRAPRDELEM). Residues 68 to 79 (SGGGGGGGGSGG) are compositionally biased toward gly residues. Residues 86 to 97 (RPRKKRYHRHTQ) are compositionally biased toward basic residues. A DNA-binding region (homeobox) is located at residues 88 to 147 (RKKRYHRHTQHQIQELEAFFKECPHPDDKQRKELSRELGLEPLQVKFWFQNKRTQMKTQH). A coiled-coil region spans residues 137–218 (QNKRTQMKTQ…DRISAIAAKY (82 aa)). Positions 256–494 (ADFDKPLVIE…LERQCERLAS (239 aa)) constitute an START domain.

This sequence belongs to the HD-ZIP homeobox family. Class IV subfamily.

Its subcellular location is the nucleus. Functionally, probable transcription factor. This chain is Homeobox-leucine zipper protein ROC7 (ROC7), found in Oryza sativa subsp. japonica (Rice).